We begin with the raw amino-acid sequence, 274 residues long: Large ribosomal subunit protein uL2 (274 aa).

The tract at residues 200 to 274 is disordered; it reads HALEKSGKAG…SKYIIERRKK (75 aa). 2 stretches are compositionally biased toward basic residues: residues 207–220 and 255–274; these read KAGR…RPRN and LKTR…RRKK.

This sequence belongs to the universal ribosomal protein uL2 family. Part of the 50S ribosomal subunit. Forms a bridge to the 30S subunit in the 70S ribosome.

One of the primary rRNA binding proteins. Required for association of the 30S and 50S subunits to form the 70S ribosome, for tRNA binding and peptide bond formation. It has been suggested to have peptidyltransferase activity; this is somewhat controversial. Makes several contacts with the 16S rRNA in the 70S ribosome. The chain is Large ribosomal subunit protein uL2 from Parabacteroides distasonis (strain ATCC 8503 / DSM 20701 / CIP 104284 / JCM 5825 / NCTC 11152).